The sequence spans 193 residues: Potassium-transporting ATPase KdpC subunit (193 aa).

Residues 7–27 traverse the membrane as a helical segment; the sequence is PLVVLFVVLTAVTGLAYPAVM.

This sequence belongs to the KdpC family. As to quaternary structure, the system is composed of three essential subunits: KdpA, KdpB and KdpC.

The protein localises to the cell inner membrane. In terms of biological role, part of the high-affinity ATP-driven potassium transport (or Kdp) system, which catalyzes the hydrolysis of ATP coupled with the electrogenic transport of potassium into the cytoplasm. This subunit acts as a catalytic chaperone that increases the ATP-binding affinity of the ATP-hydrolyzing subunit KdpB by the formation of a transient KdpB/KdpC/ATP ternary complex. The chain is Potassium-transporting ATPase KdpC subunit from Burkholderia orbicola (strain MC0-3).